A 251-amino-acid chain; its full sequence is Pyrroloquinoline-quinone synthase (251 aa).

The protein belongs to the PqqC family.

It catalyses the reaction 6-(2-amino-2-carboxyethyl)-7,8-dioxo-1,2,3,4,7,8-hexahydroquinoline-2,4-dicarboxylate + 3 O2 = pyrroloquinoline quinone + 2 H2O2 + 2 H2O + H(+). It functions in the pathway cofactor biosynthesis; pyrroloquinoline quinone biosynthesis. Ring cyclization and eight-electron oxidation of 3a-(2-amino-2-carboxyethyl)-4,5-dioxo-4,5,6,7,8,9-hexahydroquinoline-7,9-dicarboxylic-acid to PQQ. The sequence is that of Pyrroloquinoline-quinone synthase from Klebsiella pneumoniae subsp. pneumoniae (strain ATCC 700721 / MGH 78578).